The following is a 292-amino-acid chain: Probable 2-(5''-triphosphoribosyl)-3'-dephosphocoenzyme-A synthase (292 aa).

It belongs to the CitG/MdcB family.

The enzyme catalyses 3'-dephospho-CoA + ATP = 2'-(5''-triphospho-alpha-D-ribosyl)-3'-dephospho-CoA + adenine. The protein is Probable 2-(5''-triphosphoribosyl)-3'-dephosphocoenzyme-A synthase of Shigella flexneri serotype 5b (strain 8401).